Reading from the N-terminus, the 64-residue chain is Large ribosomal subunit protein uL30 (64 aa).

The tract at residues 1–22 (MAKAAKTIKVEQTRSAIRRQHS) is disordered.

It belongs to the universal ribosomal protein uL30 family. As to quaternary structure, part of the 50S ribosomal subunit.

This is Large ribosomal subunit protein uL30 from Nitrobacter hamburgensis (strain DSM 10229 / NCIMB 13809 / X14).